The following is a 301-amino-acid chain: Intraflagellar transport protein 46 homolog (301 aa).

Composition is skewed to acidic residues over residues 1–12 and 30–52; these read MADNSSDEYEED and ENDDDDDDDSSETDSDDDDDDEE. Positions 1 to 66 are disordered; the sequence is MADNSSDEYE…LEGAYDPADY (66 aa). Residue Thr283 is modified to Phosphothreonine.

It belongs to the IFT46 family. Component of the IFT complex B, at least composed of IFT20, IFT22, IFT25, IFT27, IFT46, IFT52, TRAF3IP1/IFT54, IFT57, IFT74, IFT80, IFT81, and IFT88. Interacts with IFT57, IFT88 and DAW1. Interacts with ARL13B. Interacts with IFT56. Interacts with TTC25. Interacts with IFT70B.

The protein localises to the cytoplasm. It is found in the cytoskeleton. It localises to the cilium basal body. Its subcellular location is the cell projection. The protein resides in the cilium. Forms part of a complex involved in intraflagellar transport (IFT), the bi-directional movement of particles required for the assembly, maintenance and functioning of primary cilia. May play a role in chondrocyte maturation and skeletogenesis. This is Intraflagellar transport protein 46 homolog (Ift46) from Rattus norvegicus (Rat).